The sequence spans 105 residues: Synaptic plasticity regulator PANTS (105 aa).

The protein belongs to the UPF0545 family. In terms of assembly, interacts with RTN4 isoform A/Nogo-A; the interaction results in enhanced RTN4-mediated inhibition of AMPA receptor clustering. Also interacts with NCAM1, RANBP2 and CCT8. In terms of processing, rapidly degraded by proteolysis following neuronal stimulation, resulting in increased AMPA receptor clustering.

It is found in the synapse. It localises to the synaptic cleft. Negatively regulates long-term potentiation and modulates adult synaptic plasticity. Stabilizes the interaction of RTN4 isoform A/Nogo-A with its receptors, inhibiting clustering of postsynaptic AMPA receptors at synaptic sites. Upon neuronal stimulation, degraded at synapses, reducing RTN4 signaling and allowing AMPA receptor clustering at individual synapses. The chain is Synaptic plasticity regulator PANTS (C22orf39) from Homo sapiens (Human).